The chain runs to 514 residues: ATP synthase subunit alpha (514 aa).

170–177 (GDRQIGKT) contributes to the ATP binding site.

It belongs to the ATPase alpha/beta chains family. F-type ATPases have 2 components, CF(1) - the catalytic core - and CF(0) - the membrane proton channel. CF(1) has five subunits: alpha(3), beta(3), gamma(1), delta(1), epsilon(1). CF(0) has three main subunits: a(1), b(2) and c(9-12). The alpha and beta chains form an alternating ring which encloses part of the gamma chain. CF(1) is attached to CF(0) by a central stalk formed by the gamma and epsilon chains, while a peripheral stalk is formed by the delta and b chains.

It is found in the cell inner membrane. It catalyses the reaction ATP + H2O + 4 H(+)(in) = ADP + phosphate + 5 H(+)(out). In terms of biological role, produces ATP from ADP in the presence of a proton gradient across the membrane. The alpha chain is a regulatory subunit. The polypeptide is ATP synthase subunit alpha (Pseudomonas fluorescens (strain Pf0-1)).